We begin with the raw amino-acid sequence, 68 residues long: Protein SlyX homolog (68 aa).

Belongs to the SlyX family.

In Pseudomonas fluorescens (strain Pf0-1), this protein is Protein SlyX homolog.